A 151-amino-acid chain; its full sequence is Glycosylation-dependent cell adhesion molecule 1 (151 aa).

The N-terminal stretch at 1–19 is a signal peptide; sequence MKFFTVLLFVSLAATSLAL. A disordered region spans residues 29–123; the sequence is MKTQPTDAIP…ENLTKSSQTV (95 aa). A compositionally biased stretch (low complexity) spans 42-52; it reads STPTSYTSEES. The span at 53–71 shows a compositional bias: basic and acidic residues; sequence TSSKDLSKEPSIFREELIS. Ser-54, Ser-59, Ser-63, and Ser-71 each carry phosphoserine. A compositionally biased stretch (low complexity) spans 103 to 114; sequence RPTTSAATTSEE. Asn-115 carries N-linked (GlcNAc...) asparagine glycosylation.

The protein belongs to the PP3/GlyCAM-1 family. Post-translationally, extensively O-glycosylated. In terms of tissue distribution, lymph nodes. Associated with the lumenal surface of the high endothelial venules of peripheral lymph nodes.

The protein localises to the cell membrane. Functionally, adhesion molecule that accomplishes cell binding by presenting carbohydrate(s) to the lectin domain of L-selectin. The sequence is that of Glycosylation-dependent cell adhesion molecule 1 (Glycam1) from Mus musculus (Mouse).